The sequence spans 186 residues: Large ribosomal subunit protein bL12c (186 aa).

Polar residues predominate over residues 1–11; that stretch reads MASTLSTITLR. Disordered regions lie at residues 1–23 and 162–186; these read MASTLSTITLRSPSPSTASSTHA and EGVSKDEAEDAKKQLEEAGAKVSIA. The N-terminal 53 residues, 1–53, are a transit peptide targeting the chloroplast; it reads MASTLSTITLRSPSPSTASSTHASIPFPKKALEFPIRTPKLHHRRATFLRPLA. The span at 12 to 23 shows a compositional bias: low complexity; the sequence is SPSPSTASSTHA. Positions 162 to 180 are enriched in basic and acidic residues; it reads EGVSKDEAEDAKKQLEEAG.

The protein belongs to the bacterial ribosomal protein bL12 family.

The protein resides in the plastid. Its subcellular location is the chloroplast. In Nicotiana tabacum (Common tobacco), this protein is Large ribosomal subunit protein bL12c (RPL12).